Reading from the N-terminus, the 344-residue chain is uncharacterized protein (344 aa).

The segment at 190 to 232 (SGKRVRSAKKSGADAARASEGATCDRASSESVSPTARPPAQAS) is disordered.

This is an uncharacterized protein from Treponema pallidum (strain Nichols).